Consider the following 431-residue polypeptide: Nuclear receptor subfamily 1 group I member 2 (431 aa).

NR C4-type zinc fingers lie at residues 38–58 and 74–99; these read CRVCGDKANGYHFNVMTCEGC and CPFRKGTCEITRKTRRQCQACRLRKC. Positions 38–104 form a DNA-binding region, nuclear receptor; it reads CRVCGDKANG…RLRKCLESGM (67 aa). A Bipartite nuclear localization signal motif is present at residues 63–89; that stretch reads RRAMKRNVRLRCPFRKGTCEITRKTRR. Residues 105-142 form a hinge region; it reads KKEMIMSDAAVEQRRALIKRKKREKIEAPPPGGQGLTE. One can recognise an NR LBD domain in the interval 143 to 430; it reads EQQALIQELM…LMQELFSSTD (288 aa). Residues S244 and 282-285 contribute to the hyperforin site; that span reads ILRF.

The protein belongs to the nuclear hormone receptor family. NR1 subfamily. Heterodimer with RXRA. Interacts with NCOA1. Interacts (via domain NR LBD) with CRY1 and CRY2 in a ligand-dependent manner.

It localises to the nucleus. Functionally, nuclear receptor that binds and is activated by a variety of endogenous and xenobiotic compounds. Transcription factor that activates the transcription of multiple genes involved in the metabolism and secretion of potentially harmful xenobiotics, endogenous compounds and drugs. Response to specific ligands is species-specific, due to differences in the ligand-binding domain. Activated by naturally occurring steroids, such as pregnenolone and progesterone. Binds to a response element in the promoters of the CYP3A4 and ABCB1/MDR1 genes. The protein is Nuclear receptor subfamily 1 group I member 2 (Nr1i2) of Rattus norvegicus (Rat).